A 275-amino-acid polypeptide reads, in one-letter code: NH(3)-dependent NAD(+) synthetase (275 aa).

Position 46–53 (46–53 (GISGGQDS)) interacts with ATP. Aspartate 52 contributes to the Mg(2+) binding site. A deamido-NAD(+)-binding site is contributed by arginine 140. Threonine 160 provides a ligand contact to ATP. Glutamate 165 contacts Mg(2+). The deamido-NAD(+) site is built by lysine 173 and aspartate 180. Residues lysine 189 and threonine 211 each coordinate ATP. 260 to 261 (HK) contacts deamido-NAD(+).

Belongs to the NAD synthetase family. Homodimer.

It catalyses the reaction deamido-NAD(+) + NH4(+) + ATP = AMP + diphosphate + NAD(+) + H(+). The protein operates within cofactor biosynthesis; NAD(+) biosynthesis; NAD(+) from deamido-NAD(+) (ammonia route): step 1/1. In terms of biological role, catalyzes the ATP-dependent amidation of deamido-NAD to form NAD. Uses ammonia as a nitrogen source. The protein is NH(3)-dependent NAD(+) synthetase of Escherichia coli O8 (strain IAI1).